A 569-amino-acid chain; its full sequence is Beta-lactamase-like protein 4 (569 aa).

An N-terminal signal peptide occupies residues 1–19; the sequence is MKYYLYLFLLFTFANLLYS. 13 N-linked (GlcNAc...) asparagine glycosylation sites follow: Asn87, Asn172, Asn239, Asn240, Asn250, Asn299, Asn343, Asn412, Asn419, Asn436, Asn468, Asn509, and Asn535.

Belongs to the beta-lactamase family.

It is found in the secreted. This Dictyostelium discoideum (Social amoeba) protein is Beta-lactamase-like protein 4.